The following is a 180-amino-acid chain: Probable chorismate pyruvate-lyase (180 aa).

Positions 82, 120, and 165 each coordinate substrate.

Belongs to the UbiC family.

The protein localises to the cytoplasm. It catalyses the reaction chorismate = 4-hydroxybenzoate + pyruvate. It functions in the pathway cofactor biosynthesis; ubiquinone biosynthesis. Removes the pyruvyl group from chorismate, with concomitant aromatization of the ring, to provide 4-hydroxybenzoate (4HB) for the ubiquinone pathway. The protein is Probable chorismate pyruvate-lyase of Photobacterium profundum (strain SS9).